The following is a 220-amino-acid chain: MPSFSTQSITRPSVGVAIGPDGIYRALYGWYGNEQPLEIDKCSYDLSTCSPVVSSGPTIGDGYGGFYDGTNIWFSGSDEANDQGVVASYNPSTGAFNYAYYPGNSTKYVIKIFYYNGYYYLITCCDPGTLLKCTNPLNPSTCTQLNINAPTSFTVQEYYMYTQGSYALLSYFQKNMNNKLFSLCNFDGTNLYNCINIYSTTGILHYLHHSLLEEQYVEII.

It localises to the virion. The chain is Coat protein TP4 from Thermoproteus tenax (TTV1).